The primary structure comprises 878 residues: Aconitate hydratase A (878 aa).

3 residues coordinate [4Fe-4S] cluster: cysteine 426, cysteine 492, and cysteine 495.

The protein belongs to the aconitase/IPM isomerase family. As to quaternary structure, monomer. The cofactor is [4Fe-4S] cluster.

It catalyses the reaction citrate = D-threo-isocitrate. The enzyme catalyses (2S,3R)-3-hydroxybutane-1,2,3-tricarboxylate = 2-methyl-cis-aconitate + H2O. It participates in carbohydrate metabolism; tricarboxylic acid cycle; isocitrate from oxaloacetate: step 2/2. The protein operates within organic acid metabolism; propanoate degradation. Its function is as follows. Involved in the catabolism of short chain fatty acids (SCFA) via the tricarboxylic acid (TCA)(acetyl degradation route) and probably the 2-methylcitrate cycle I (propionate degradation route). Catalyzes the reversible isomerization of citrate to isocitrate via cis-aconitate. Could catalyze the hydration of 2-methyl-cis-aconitate to yield (2R,3S)-2-methylisocitrate. The apo form of AcnA functions as a RNA-binding regulatory protein. This chain is Aconitate hydratase A (acnA), found in Rickettsia prowazekii (strain Madrid E).